A 144-amino-acid chain; its full sequence is MLRESAVVISYENGIAKVKCQSQSACGQCAAKNSCGTSSLSELNGKRGEHIFNVETLMPLREGQIVEIGLEEKSMLLSALLMYVVPLLTLLIVTMLSDYISDNEILRAILIFGLTALSFILVKSYSRKLGQQTEFQPVLLRVLS.

The next 2 helical transmembrane spans lie at 76–96 (LLSA…VTML) and 105–125 (ILRA…VKSY).

It belongs to the RseC family.

The protein resides in the cell inner membrane. This is an uncharacterized protein from Haemophilus influenzae (strain ATCC 51907 / DSM 11121 / KW20 / Rd).